The primary structure comprises 445 residues: Exodeoxyribonuclease 7 large subunit (445 aa).

It belongs to the XseA family. Heterooligomer composed of large and small subunits.

It is found in the cytoplasm. The enzyme catalyses Exonucleolytic cleavage in either 5'- to 3'- or 3'- to 5'-direction to yield nucleoside 5'-phosphates.. Bidirectionally degrades single-stranded DNA into large acid-insoluble oligonucleotides, which are then degraded further into small acid-soluble oligonucleotides. In Staphylococcus aureus (strain bovine RF122 / ET3-1), this protein is Exodeoxyribonuclease 7 large subunit.